Consider the following 338-residue polypeptide: Ketol-acid reductoisomerase (NADP(+)) (338 aa).

The KARI N-terminal Rossmann domain occupies 1 to 181; it reads MKVSYDKDCD…GGGRTGIIET (181 aa). NADP(+)-binding positions include 24–27, arginine 47, serine 50, serine 52, and 82–85; these read YGSQ and DEFQ. The active site involves histidine 107. Glycine 133 provides a ligand contact to NADP(+). Positions 182 to 327 constitute a KARI C-terminal knotted domain; the sequence is TFKDETETDL…EKLRAMMPWI (146 aa). Residues aspartate 190, glutamate 194, glutamate 226, and glutamate 230 each contribute to the Mg(2+) site. Serine 251 lines the substrate pocket.

This sequence belongs to the ketol-acid reductoisomerase family. It depends on Mg(2+) as a cofactor.

It catalyses the reaction (2R)-2,3-dihydroxy-3-methylbutanoate + NADP(+) = (2S)-2-acetolactate + NADPH + H(+). The catalysed reaction is (2R,3R)-2,3-dihydroxy-3-methylpentanoate + NADP(+) = (S)-2-ethyl-2-hydroxy-3-oxobutanoate + NADPH + H(+). It participates in amino-acid biosynthesis; L-isoleucine biosynthesis; L-isoleucine from 2-oxobutanoate: step 2/4. The protein operates within amino-acid biosynthesis; L-valine biosynthesis; L-valine from pyruvate: step 2/4. Involved in the biosynthesis of branched-chain amino acids (BCAA). Catalyzes an alkyl-migration followed by a ketol-acid reduction of (S)-2-acetolactate (S2AL) to yield (R)-2,3-dihydroxy-isovalerate. In the isomerase reaction, S2AL is rearranged via a Mg-dependent methyl migration to produce 3-hydroxy-3-methyl-2-ketobutyrate (HMKB). In the reductase reaction, this 2-ketoacid undergoes a metal-dependent reduction by NADPH to yield (R)-2,3-dihydroxy-isovalerate. This Stutzerimonas stutzeri (strain A1501) (Pseudomonas stutzeri) protein is Ketol-acid reductoisomerase (NADP(+)).